A 95-amino-acid polypeptide reads, in one-letter code: Protein NCBP2AS2 homolog (95 aa).

The chain is Protein NCBP2AS2 homolog from Ixodes scapularis (Black-legged tick).